Consider the following 149-residue polypeptide: UPF0260 protein PSEEN4031 (149 aa).

It belongs to the UPF0260 family.

This Pseudomonas entomophila (strain L48) protein is UPF0260 protein PSEEN4031.